Reading from the N-terminus, the 415-residue chain is Multifunctional CCA protein (415 aa).

Residues glycine 8 and arginine 11 each contribute to the ATP site. Residues glycine 8 and arginine 11 each coordinate CTP. Mg(2+) is bound by residues glutamate 21 and aspartate 23. The ATP site is built by arginine 91, arginine 137, and arginine 140. Arginine 91, arginine 137, and arginine 140 together coordinate CTP. One can recognise an HD domain in the interval 226–327; it reads TGIHTLMTVS…IKLFSAIDVW (102 aa).

The protein belongs to the tRNA nucleotidyltransferase/poly(A) polymerase family. Bacterial CCA-adding enzyme type 1 subfamily. In terms of assembly, monomer. Can also form homodimers and oligomers. Requires Mg(2+) as cofactor. Ni(2+) serves as cofactor.

The enzyme catalyses a tRNA precursor + 2 CTP + ATP = a tRNA with a 3' CCA end + 3 diphosphate. The catalysed reaction is a tRNA with a 3' CCA end + 2 CTP + ATP = a tRNA with a 3' CCACCA end + 3 diphosphate. Its function is as follows. Catalyzes the addition and repair of the essential 3'-terminal CCA sequence in tRNAs without using a nucleic acid template. Adds these three nucleotides in the order of C, C, and A to the tRNA nucleotide-73, using CTP and ATP as substrates and producing inorganic pyrophosphate. tRNA 3'-terminal CCA addition is required both for tRNA processing and repair. Also involved in tRNA surveillance by mediating tandem CCA addition to generate a CCACCA at the 3' terminus of unstable tRNAs. While stable tRNAs receive only 3'-terminal CCA, unstable tRNAs are marked with CCACCA and rapidly degraded. This chain is Multifunctional CCA protein, found in Sodalis glossinidius (strain morsitans).